Here is a 302-residue protein sequence, read N- to C-terminus: 4-hydroxy-tetrahydrodipicolinate synthase (302 aa).

Residue T55 coordinates pyruvate. Y144 (proton donor/acceptor) is an active-site residue. K172 serves as the catalytic Schiff-base intermediate with substrate. V214 is a pyruvate binding site.

Belongs to the DapA family. In terms of assembly, homotetramer; dimer of dimers.

Its subcellular location is the cytoplasm. The enzyme catalyses L-aspartate 4-semialdehyde + pyruvate = (2S,4S)-4-hydroxy-2,3,4,5-tetrahydrodipicolinate + H2O + H(+). It participates in amino-acid biosynthesis; L-lysine biosynthesis via DAP pathway; (S)-tetrahydrodipicolinate from L-aspartate: step 3/4. Functionally, catalyzes the condensation of (S)-aspartate-beta-semialdehyde [(S)-ASA] and pyruvate to 4-hydroxy-tetrahydrodipicolinate (HTPA). This chain is 4-hydroxy-tetrahydrodipicolinate synthase, found in Prochlorococcus marinus (strain NATL2A).